Reading from the N-terminus, the 358-residue chain is Peptide chain release factor 1 (358 aa).

The residue at position 233 (Q233) is an N5-methylglutamine.

It belongs to the prokaryotic/mitochondrial release factor family. In terms of processing, methylated by PrmC. Methylation increases the termination efficiency of RF1.

The protein localises to the cytoplasm. Its function is as follows. Peptide chain release factor 1 directs the termination of translation in response to the peptide chain termination codons UAG and UAA. The sequence is that of Peptide chain release factor 1 from Flavobacterium johnsoniae (strain ATCC 17061 / DSM 2064 / JCM 8514 / BCRC 14874 / CCUG 350202 / NBRC 14942 / NCIMB 11054 / UW101) (Cytophaga johnsonae).